The chain runs to 203 residues: MIAIIDYNAGNLRSIEKALELYTKNIVVTSDPETILSADKLVLPGVGNFGDSMKNISQKTGDCSLNEIINKCVQKVPFLGICLGMQLLLEKSEECPETPGLGVIKGDVIKFKHSEKIPHMGWNTVNQVQDIPLFEGIANNEYFYFVHSYHVNPSEKDVISGTTNYGYEFPCILNKKNVYATQFHPEKSGKNGLKMIENFVELI.

In terms of domain architecture, Glutamine amidotransferase type-1 spans 1–203 (MIAIIDYNAG…KMIENFVELI (203 aa)). Cys-82 (nucleophile) is an active-site residue. Catalysis depends on residues His-184 and Glu-186.

Heterodimer of HisH and HisF.

It localises to the cytoplasm. The catalysed reaction is 5-[(5-phospho-1-deoxy-D-ribulos-1-ylimino)methylamino]-1-(5-phospho-beta-D-ribosyl)imidazole-4-carboxamide + L-glutamine = D-erythro-1-(imidazol-4-yl)glycerol 3-phosphate + 5-amino-1-(5-phospho-beta-D-ribosyl)imidazole-4-carboxamide + L-glutamate + H(+). It carries out the reaction L-glutamine + H2O = L-glutamate + NH4(+). Its pathway is amino-acid biosynthesis; L-histidine biosynthesis; L-histidine from 5-phospho-alpha-D-ribose 1-diphosphate: step 5/9. In terms of biological role, IGPS catalyzes the conversion of PRFAR and glutamine to IGP, AICAR and glutamate. The HisH subunit provides the glutamine amidotransferase activity that produces the ammonia necessary to HisF for the synthesis of IGP and AICAR. The protein is Imidazole glycerol phosphate synthase subunit HisH 1 (hisH1) of Methanococcus maripaludis (strain DSM 14266 / JCM 13030 / NBRC 101832 / S2 / LL).